Consider the following 858-residue polypeptide: Elongation factor 2 (858 aa).

The tr-type G domain occupies 17-362 (ANIRNMSVIA…MITIHLPSPV (346 aa)). Residues 26 to 33 (AHVDHGKS), 158 to 161 (NKMD), and 216 to 218 (SGL) contribute to the GTP site. Histidine 715 is subject to Diphthamide.

The protein belongs to the TRAFAC class translation factor GTPase superfamily. Classic translation factor GTPase family. EF-G/EF-2 subfamily. As to quaternary structure, binds to 80S ribosomes. Actively translating ribosomes show mutually exclusive binding of eIF5a (EIF5A or EIF5A2) and EEF2/eEF2. Interacts with serbp1; interaction sequesters eef2/eEF2 at the A-site of the ribosome, thereby blocking the interaction sites of the mRNA-tRNA complex, promoting ribosome stabilization and hibernation. Interacts with habp4; interaction takes place at the A-site of hibernating ribosomes and promotes ribosome stabilization.

Its subcellular location is the cytoplasm. It is found in the nucleus. It catalyses the reaction GTP + H2O = GDP + phosphate + H(+). Functionally, catalyzes the GTP-dependent ribosomal translocation step during translation elongation. During this step, the ribosome changes from the pre-translocational (PRE) to the post-translocational (POST) state as the newly formed A-site-bound peptidyl-tRNA and P-site-bound deacylated tRNA move to the P and E sites, respectively. Catalyzes the coordinated movement of the two tRNA molecules, the mRNA and conformational changes in the ribosome. The polypeptide is Elongation factor 2 (Xenopus laevis (African clawed frog)).